A 137-amino-acid polypeptide reads, in one-letter code: uncharacterized protein (137 aa).

Residues 5–136 (NRHLIHQINQ…FSHLFRMFLQ (132 aa)) enclose the HTH marR-type domain. The H-T-H motif DNA-binding region spans 51 to 74 (QKEIWSYLNVEAPTVTRTIKRLEE).

This is an uncharacterized protein from Bacillus subtilis (strain 168).